A 622-amino-acid polypeptide reads, in one-letter code: DNA mismatch repair protein MutL (622 aa).

The protein belongs to the DNA mismatch repair MutL/HexB family.

Functionally, this protein is involved in the repair of mismatches in DNA. It is required for dam-dependent methyl-directed DNA mismatch repair. May act as a 'molecular matchmaker', a protein that promotes the formation of a stable complex between two or more DNA-binding proteins in an ATP-dependent manner without itself being part of a final effector complex. The chain is DNA mismatch repair protein MutL from Prosthecochloris aestuarii (strain DSM 271 / SK 413).